Reading from the N-terminus, the 101-residue chain is Large ribosomal subunit protein uL23 (101 aa).

This sequence belongs to the universal ribosomal protein uL23 family. In terms of assembly, part of the 50S ribosomal subunit. Contacts protein L29, and trigger factor when it is bound to the ribosome.

Its function is as follows. One of the early assembly proteins it binds 23S rRNA. One of the proteins that surrounds the polypeptide exit tunnel on the outside of the ribosome. Forms the main docking site for trigger factor binding to the ribosome. The sequence is that of Large ribosomal subunit protein uL23 from Leptospira biflexa serovar Patoc (strain Patoc 1 / Ames).